The chain runs to 1244 residues: Superkiller complex protein 2 (1244 aa).

Residues 218–249 (LDLSGGDEDEGEAAGGPRGDNASPSPSGTPLV) form a disordered region. 2 positions are modified to phosphoserine: serine 242 and serine 253. The Helicase ATP-binding domain maps to 316–472 (ILHLEQHDSV…WIGRLKRRQI (157 aa)). An ATP-binding site is contributed by 329–336 (AHTSAGKT). The DEVH box signature appears at 420–423 (DEVH). Residues 582–752 (GLTSLDLTTS…LTYTMILNLL (171 aa)) enclose the Helicase C-terminal domain.

This sequence belongs to the helicase family. SKI2 subfamily. Component of the SKI complex which consists of SKIC2, SKIC3 and SKIC8. Interacts with HBS1L isoform 2.

Its subcellular location is the nucleus. It is found in the cytoplasm. It catalyses the reaction ATP + H2O = ADP + phosphate + H(+). Functionally, helicase component of the SKI complex, a multiprotein complex that assists the RNA-degrading exosome during the mRNA decay and quality-control pathways. The SKI complex catalyzes mRNA extraction from 80S ribosomal complexes in the 3'-5' direction and channels mRNA to the cytosolic exosome for degradation. SKI-mediated extraction of mRNA from stalled ribosomes allow binding of the Pelota-HBS1L complex and subsequent ribosome disassembly by ABCE1 for ribosome recycling. In the nucleus, the SKI complex associates with transcriptionally active genes in a manner dependent on PAF1 complex (PAF1C). The protein is Superkiller complex protein 2 of Mus musculus (Mouse).